A 452-amino-acid chain; its full sequence is Probable E3 ubiquitin-protein ligase ARI15 (452 aa).

The segment at 22–256 (SRVYCGICSN…GTSGSCLAPA (235 aa)) is TRIAD supradomain. Cys-26, Cys-29, Cys-54, His-56, Cys-59, Cys-62, Cys-83, Cys-88, Cys-128, Cys-133, Cys-154, Cys-156, Cys-161, Cys-164, His-169, Cys-174, Cys-208, Cys-211, Cys-229, Cys-231, Cys-236, Cys-239, His-246, and Cys-252 together coordinate Zn(2+). The segment at 26–88 (CGICSNIGDD…TAISCPDRDC (63 aa)) adopts an RING-type 1 zinc-finger fold. The IBR-type zinc-finger motif lies at 106 to 174 (AMYELYILKS…MLESHRPVTC (69 aa)). An RING-type 2; atypical zinc finger spans residues 208-239 (CPHCFIPVEIDGERPWAQFLTCVCSGRFCWKC). The RanBP2-type zinc finger occupies 414-445 (NYGGPYWLCDRCTYGNSWFQRACKMCCDPTAS).

Belongs to the RBR family. Ariadne subfamily. The cofactor is Zn(2+). Ubiquitous.

It catalyses the reaction [E2 ubiquitin-conjugating enzyme]-S-ubiquitinyl-L-cysteine + [acceptor protein]-L-lysine = [E2 ubiquitin-conjugating enzyme]-L-cysteine + [acceptor protein]-N(6)-ubiquitinyl-L-lysine.. It participates in protein modification; protein ubiquitination. Might act as an E3 ubiquitin-protein ligase, or as part of E3 complex, which accepts ubiquitin from specific E2 ubiquitin-conjugating enzymes and then transfers it to substrates. The protein is Probable E3 ubiquitin-protein ligase ARI15 (ARI15) of Arabidopsis thaliana (Mouse-ear cress).